The following is a 203-amino-acid chain: Probable chemoreceptor glutamine deamidase CheD (203 aa).

The protein belongs to the CheD family.

The catalysed reaction is L-glutaminyl-[protein] + H2O = L-glutamyl-[protein] + NH4(+). Its function is as follows. Probably deamidates glutamine residues to glutamate on methyl-accepting chemotaxis receptors (MCPs), playing an important role in chemotaxis. The chain is Probable chemoreceptor glutamine deamidase CheD from Herminiimonas arsenicoxydans.